The sequence spans 396 residues: Ribosomal RNA large subunit methyltransferase I (396 aa).

In terms of domain architecture, PUA spans 2–79 (SIRIKLKPGR…KEEAIDRDFF (78 aa)).

It belongs to the methyltransferase superfamily. RlmI family.

Its subcellular location is the cytoplasm. It catalyses the reaction cytidine(1962) in 23S rRNA + S-adenosyl-L-methionine = 5-methylcytidine(1962) in 23S rRNA + S-adenosyl-L-homocysteine + H(+). Functionally, specifically methylates the cytosine at position 1962 (m5C1962) of 23S rRNA. This chain is Ribosomal RNA large subunit methyltransferase I, found in Shewanella amazonensis (strain ATCC BAA-1098 / SB2B).